A 335-amino-acid chain; its full sequence is Protein FATTY ACID EXPORT 3, chloroplastic (335 aa).

A chloroplast-targeting transit peptide spans M1–V72. Residues G82–T101 form a disordered region. Basic and acidic residues predominate over residues V88 to T101. The stretch at T101 to K160 forms a coiled coil. 3 helical membrane passes run F205–V225, S228–A248, and S286–Y306. The segment at P316 to G335 is disordered.

The protein belongs to the TMEM14 family.

The protein resides in the plastid. Its subcellular location is the chloroplast membrane. May be involved in free fatty acids export from the plastids. The chain is Protein FATTY ACID EXPORT 3, chloroplastic from Arabidopsis thaliana (Mouse-ear cress).